The following is a 578-amino-acid chain: MKPDYDVLIIGSGFGGSVTALRLTEKGYRVGVLEAGRRFSDEEFAKTSWDLRKFLWAPRLGCYGIQRIHPLRNVMILAGAGVGGGSLNYANTLYVPPEPFFADQQWSHITDWRGELMPHYQQAQRMLGVVQNPTFTDADRIVKEVADEMGFGDTWVPTPVGVFFGPDGTKTPGKTVPDPYFGGAGPARTGCLECGCCMTGCRHGAKNTLVKNYLGLAESAGAQVIPMTTVKGFERRSDGLWEVRTVRTGSWLRRDRRTFTATQLVLAAGTWGTQHLLFKMRDRGRLPGLSKRLGVLTRTNSESIVGAATLKVNPDLDLTHGVAITSSIHPTADTHIEPVRYGKGSNAMGLLQTLMTDGSGPQGTDVPRWRQLLQTASQDPRGTIRMLNPRQWSERTVIALVMQHLDNSITTFTKRGKLGIRWYSSKQGHGEPNPTWIPIGNQVTRRIAAKIDGVAGGTWGELFNIPLTAHFLGGAVIGDDPEHGVIDPYHRVYGYPTLYVVDGAAISANLGVNPSLSIAAQAERAASLWPNKGETDRRPPQGEPYRRLAPIQPAHPVVPADAPGALRWLPIDPVSNAG.

Gly15, Glu34, Gly85, Ala90, and Val230 together coordinate FAD. The active-site Proton acceptor is His470. FAD is bound at residue Gly503. Residues 529–551 (WPNKGETDRRPPQGEPYRRLAPI) form a disordered region. The span at 533-546 (GETDRRPPQGEPYR) shows a compositional bias: basic and acidic residues.

Belongs to the GMC oxidoreductase family. The cofactor is FAD.

It localises to the secreted. It catalyses the reaction cholesterol + O2 = cholest-5-en-3-one + H2O2. The catalysed reaction is cholest-5-en-3-one = cholest-4-en-3-one. It participates in steroid metabolism; cholesterol degradation. Bifunctional enzyme that catalyzes the oxidation and isomerization of cholesterol to cholestenone (cholest-4-en-3-one), an initial step in the cholesterol degradation process. Contributes to virulence. The polypeptide is Cholesterol oxidase (choD) (Mycobacterium tuberculosis (strain CDC 1551 / Oshkosh)).